The sequence spans 386 residues: MNISTWSTLVTPESCHRLAASGHSLLIVLHYNHSGRLASRGGSEDGGGLGMLRGPSVAAGCLVVLENAMVLAAIAIYMRSRRWVYYCLLNITLSDLLTGLAYVVNVLLSGTRTFQLSPVHWFLREGLLFMALAASTFSLLFTAGERFATMVRVAESGATKTSRVYGCIGLCWLLAAILGLLPLLGWNCVCAFPRCSSLLPLYSKGYVLFCVVVFALILVAILSLYGAIFRVVRANGQKSPRPPARRKSRRLLNTVLMILVAFVVCWGPLFGLLLADIFGSNVWAQEYLRGMDWILALAVFNSAINPLIYSFRSREVQRAVLAFLCCGCLWLGLRGPGDCLTRITEAHSGASTTDSSLRPRDSFRTSRSLSFRMREPLSSISSVRST.

Residues 1–56 lie on the Extracellular side of the membrane; the sequence is MNISTWSTLVTPESCHRLAASGHSLLIVLHYNHSGRLASRGGSEDGGGLGMLRGPS. 2 N-linked (GlcNAc...) asparagine glycosylation sites follow: Asn2 and Asn32. A helical transmembrane segment spans residues 57–77; the sequence is VAAGCLVVLENAMVLAAIAIY. Residues 78 to 87 lie on the Cytoplasmic side of the membrane; sequence MRSRRWVYYC. A helical membrane pass occupies residues 88 to 108; that stretch reads LLNITLSDLLTGLAYVVNVLL. Residues 109 to 120 lie on the Extracellular side of the membrane; it reads SGTRTFQLSPVH. A helical membrane pass occupies residues 121-141; it reads WFLREGLLFMALAASTFSLLF. At 142-163 the chain is on the cytoplasmic side; the sequence is TAGERFATMVRVAESGATKTSR. A helical membrane pass occupies residues 164–184; sequence VYGCIGLCWLLAAILGLLPLL. The Extracellular segment spans residues 185–208; it reads GWNCVCAFPRCSSLLPLYSKGYVL. Residues 209–229 form a helical membrane-spanning segment; sequence FCVVVFALILVAILSLYGAIF. Topologically, residues 230 to 254 are cytoplasmic; it reads RVVRANGQKSPRPPARRKSRRLLNT. The chain crosses the membrane as a helical span at residues 255 to 275; sequence VLMILVAFVVCWGPLFGLLLA. At 276-290 the chain is on the extracellular side; that stretch reads DIFGSNVWAQEYLRG. The helical transmembrane segment at 291-311 threads the bilayer; that stretch reads MDWILALAVFNSAINPLIYSF. Over 312-386 the chain is Cytoplasmic; sequence RSREVQRAVL…LSSISSVRST (75 aa). Residue Cys325 is the site of S-palmitoyl cysteine attachment.

The protein belongs to the G-protein coupled receptor 1 family. Specifically expressed in fetal and adult lymphoid and hematopoietic tissue. Expressed in lung, spleen, thymus and lymph node but absent in other non-lymphatic tissue. Coexpressed with GNA15 at the same relative levels in all tissues examined, with the highest levels in adult spleen and lung.

The protein resides in the cell membrane. Receptor for the lysosphingolipid sphingosine 1-phosphate (S1P). S1P is a bioactive lysophospholipid that elicits diverse physiological effect on most types of cells and tissues. May be involved in cell migration processes that are specific for lymphocytes. In Mus musculus (Mouse), this protein is Sphingosine 1-phosphate receptor 4 (S1pr4).